Here is a 123-residue protein sequence, read N- to C-terminus: Cysteine proteinase inhibitor 8 (123 aa).

An N-terminal signal peptide occupies residues 1–19 (MARIPLLLALLLAVSAAAA). The 59-residue stretch at 33–91 (GGWSPITDVGDPHIQELGGWAVERHASLSSDGLRFRRVTSGEQQVVSGMNYRLVVSASD) folds into the Cystatin domain. Positions 76–80 (QVVSG) match the Secondary area of contact motif.

This sequence belongs to the cystatin family. Phytocystatin subfamily.

The protein localises to the secreted. Its function is as follows. Specific inhibitor of cysteine proteinases. Probably involved in the regulation of endogenous processes and in defense against pests and pathogens. In Oryza sativa subsp. japonica (Rice), this protein is Cysteine proteinase inhibitor 8.